Consider the following 290-residue polypeptide: Glycine--tRNA ligase alpha subunit (290 aa).

The protein belongs to the class-II aminoacyl-tRNA synthetase family. In terms of assembly, tetramer of two alpha and two beta subunits.

The protein localises to the cytoplasm. The enzyme catalyses tRNA(Gly) + glycine + ATP = glycyl-tRNA(Gly) + AMP + diphosphate. This Nitratiruptor sp. (strain SB155-2) protein is Glycine--tRNA ligase alpha subunit.